Reading from the N-terminus, the 496-residue chain is PE-PGRS family protein PE_PGRS1 (496 aa).

The 91-residue stretch at 4-94 folds into the PE domain; that stretch reads LITSPATVAA…VCYAAAETAN (91 aa). A disordered region spans residues 461 to 480; that stretch reads LIGNGGDGGPGMFGGPGGAG.

Belongs to the mycobacterial PE family. PGRS subfamily.

It localises to the secreted. The protein resides in the cell wall. Its subcellular location is the host mitochondrion. Its function is as follows. When expressed in host mitochondria, induces mitochondrial stress which results in mitochondrial membrane depolarization, up-regulation of mitochondrial superoxides and release of cytochrome-C in the cytoplasm. The cytochrome-C in cytoplasm triggers the activation of caspase-9, caspase-3 and caspase-7, leading to the apoptosis of host macrophages. Being a late expressing protein, apoptosis induction by PE_PGRS1 may facilitate the M.tuberculosis survival and silent expansion of its niche at the site of granuloma. In terms of biological role, when expressed in THP-1 macrophages, promotes the survival of mycobacteria within macrophages after a 24- to 48-hour infection by blocking endoplasmic reticulum stress and inhibiting host cell apoptosis. Can chelate excessive intracellular calcium in THP-1 macrophages, which reduces the concentration of intracellular free Ca(2+) and blocks the PERK-eIF2alpha-ATF4 axis, thereby inhibiting the endoplasmic reticulum stress caused by infection. It also reduces the apoptosis of THP-1 macrophages by decreasing the activation of caspase-3 and caspase-9. The chain is PE-PGRS family protein PE_PGRS1 from Mycobacterium tuberculosis (strain ATCC 25618 / H37Rv).